Here is a 155-residue protein sequence, read N- to C-terminus: 2-C-methyl-D-erythritol 2,4-cyclodiphosphate synthase (155 aa).

Positions 8 and 10 each coordinate a divalent metal cation. Residues 8–10 and 34–35 contribute to the 4-CDP-2-C-methyl-D-erythritol 2-phosphate site; these read DVH and HS. H42 contacts a divalent metal cation. 4-CDP-2-C-methyl-D-erythritol 2-phosphate is bound by residues 56–58, 61–65, 100–106, 132–135, F139, and K142; these read DIG, FPDSD, AQKPKML, and TTEE.

The protein belongs to the IspF family. In terms of assembly, homotrimer. Requires a divalent metal cation as cofactor.

The enzyme catalyses 4-CDP-2-C-methyl-D-erythritol 2-phosphate = 2-C-methyl-D-erythritol 2,4-cyclic diphosphate + CMP. Its pathway is isoprenoid biosynthesis; isopentenyl diphosphate biosynthesis via DXP pathway; isopentenyl diphosphate from 1-deoxy-D-xylulose 5-phosphate: step 4/6. In terms of biological role, involved in the biosynthesis of isopentenyl diphosphate (IPP) and dimethylallyl diphosphate (DMAPP), two major building blocks of isoprenoid compounds. Catalyzes the conversion of 4-diphosphocytidyl-2-C-methyl-D-erythritol 2-phosphate (CDP-ME2P) to 2-C-methyl-D-erythritol 2,4-cyclodiphosphate (ME-CPP) with a corresponding release of cytidine 5-monophosphate (CMP). In Clostridium botulinum (strain Kyoto / Type A2), this protein is 2-C-methyl-D-erythritol 2,4-cyclodiphosphate synthase.